A 312-amino-acid chain; its full sequence is Ribonuclease HIII (312 aa).

Residues 95–312 (MSILGSDEVG…TEKAFRLLKK (218 aa)) form the RNase H type-2 domain. Positions 101, 102, and 206 each coordinate a divalent metal cation.

Belongs to the RNase HII family. RnhC subfamily. The cofactor is Mn(2+). Requires Mg(2+) as cofactor.

Its subcellular location is the cytoplasm. The enzyme catalyses Endonucleolytic cleavage to 5'-phosphomonoester.. Functionally, endonuclease that specifically degrades the RNA of RNA-DNA hybrids. This Bacillus mycoides (strain KBAB4) (Bacillus weihenstephanensis) protein is Ribonuclease HIII.